A 137-amino-acid chain; its full sequence is ATP synthase epsilon chain (137 aa).

It belongs to the ATPase epsilon chain family. F-type ATPases have 2 components, CF(1) - the catalytic core - and CF(0) - the membrane proton channel. CF(1) has five subunits: alpha(3), beta(3), gamma(1), delta(1), epsilon(1). CF(0) has three main subunits: a, b and c.

It localises to the cell membrane. Produces ATP from ADP in the presence of a proton gradient across the membrane. The chain is ATP synthase epsilon chain from Mycoplasmopsis synoviae (strain 53) (Mycoplasma synoviae).